The chain runs to 162 residues: Interleukin-15 (162 aa).

An N-terminal signal peptide occupies residues Met-1–Ala-29. A propeptide spanning residues Gly-30 to Ala-48 is cleaved from the precursor. Cystine bridges form between Cys-83/Cys-133 and Cys-90/Cys-136. 3 N-linked (GlcNAc...) asparagine glycosylation sites follow: Asn-119, Asn-127, and Asn-143.

This sequence belongs to the IL-15/IL-21 family.

Its subcellular location is the secreted. Cytokine that plays a major role in the development of inflammatory and protective immune responses to microbial invaders and parasites by modulating immune cells of both the innate and adaptive immune systems. Stimulates the proliferation of natural killer cells, T-cells and B-cells and promotes the secretion of several cytokines. In monocytes, induces the production of IL8 and monocyte chemotactic protein 1/CCL2, two chemokines that attract neutrophils and monocytes respectively to sites of infection. Unlike most cytokines, which are secreted in soluble form, IL15 is expressed in association with its high affinity IL15RA on the surface of IL15-producing cells and delivers signals to target cells that express IL2RB and IL2RG receptor subunits. Binding to its receptor triggers the phosphorylation of JAK1 and JAK3 and the recruitment and subsequent phosphorylation of signal transducer and activator of transcription-3/STAT3 and STAT5. In mast cells, induces the rapid tyrosine phosphorylation of STAT6 and thereby controls mast cell survival and release of cytokines such as IL4. This is Interleukin-15 (IL15) from Marmota monax (Woodchuck).